We begin with the raw amino-acid sequence, 226 residues long: Transmembrane 4 L6 family member 20 (226 aa).

At 1-14 (MTCCEGWTSCNGFS) the chain is on the lumenal side. Residues 15 to 35 (LLILILLGVVINCIPLGISLV) form a helical membrane-spanning segment. Topologically, residues 36 to 49 (EADSTSQNPISCYE) are cytoplasmic. Residues 50 to 70 (WWFPGIIGAGLMAIPATTMSL) form a helical membrane-spanning segment. At 71-83 (AARKRACCNNKTG) the chain is on the lumenal side. Residues 84–104 (MFLSSLFSVITVVGAVYCMLV) form a helical membrane-spanning segment. The Cytoplasmic segment spans residues 105-191 (SLQALLEGPL…RIFHFSVFMS (87 aa)). Residues 192–212 (LLLVGILELLFGLSQILIGFL) traverse the membrane as a helical segment. The Lumenal segment spans residues 213–226 (GCLCGVSQRRSQIV).

It belongs to the L6 tetraspanin family. In terms of processing, glycosylated at Asn-132, Asn-148 and Asn-163 in presence of ceramide which inverts the orientation of TM4SF20 in membranes exposing these residues to the endoplasmic reticulum lumen. Post-translationally, cleaved by signal peptidase at Ser-14 but the peptide does not act as a signal peptide. Cleavage is inhibited by ceramide which inverts the orientation of TM4SF20 in membranes exposing the N-terminus to the cytosol and not to the endoplasmic reticulum lumen.

It localises to the membrane. Its subcellular location is the endoplasmic reticulum membrane. Polytopic transmembrane protein. Inhibits regulated intramembrane proteolysis (RIP) of CREB3L1, inhibiting its activation and the induction of collagen synthesis. In response to ceramide, which alters TM4SF20 membrane topology, stimulates RIP activation of CREB3L1. Ceramide reverses the direction through which transmembrane helices are translocated into the endoplasmic reticulum membrane during translation of TM4SF20, this mechanism is called 'regulated alternative translocation' (RAT) and regulates the function of the transmembrane protein. The chain is Transmembrane 4 L6 family member 20 (Tm4sf20) from Mus musculus (Mouse).